A 400-amino-acid polypeptide reads, in one-letter code: tRNA-specific 2-thiouridylase MnmA (400 aa).

Residues 19–26 (AMSGGVDS) and Leu45 contribute to the ATP site. Cys113 functions as the Nucleophile in the catalytic mechanism. An intrachain disulfide couples Cys113 to Cys210. Gly137 is a binding site for ATP. Residues 160-162 (RDQ) are interaction with tRNA. The active-site Cysteine persulfide intermediate is Cys210.

Belongs to the MnmA/TRMU family.

The protein resides in the cytoplasm. It catalyses the reaction S-sulfanyl-L-cysteinyl-[protein] + uridine(34) in tRNA + AH2 + ATP = 2-thiouridine(34) in tRNA + L-cysteinyl-[protein] + A + AMP + diphosphate + H(+). Functionally, catalyzes the 2-thiolation of uridine at the wobble position (U34) of tRNA, leading to the formation of s(2)U34. This is tRNA-specific 2-thiouridylase MnmA from Nitrobacter winogradskyi (strain ATCC 25391 / DSM 10237 / CIP 104748 / NCIMB 11846 / Nb-255).